The following is a 441-amino-acid chain: Protein arginine methyltransferase NDUFAF7, mitochondrial (441 aa).

Residues Met1–His46 constitute a mitochondrion transit peptide.

Belongs to the NDUFAF7 family. As to quaternary structure, interacts with NDUFS2.

It is found in the mitochondrion. The enzyme catalyses L-arginyl-[protein] + 2 S-adenosyl-L-methionine = N(omega),N(omega)'-dimethyl-L-arginyl-[protein] + 2 S-adenosyl-L-homocysteine + 2 H(+). Functionally, arginine methyltransferase involved in the assembly or stability of mitochondrial NADH:ubiquinone oxidoreductase complex (complex I). Acts by mediating symmetric dimethylation of 'Arg-118' of NDUFS2 after it assembles into the complex I, stabilizing the early intermediate complex. The sequence is that of Protein arginine methyltransferase NDUFAF7, mitochondrial from Homo sapiens (Human).